The sequence spans 533 residues: MEFGLKKRARHEVKVEVASLETKYPHNVMLYHYPPTEDVHIDEFEELALERLRLLRVLDRASTRNLRVLSDEWKEIVSADLTREGLRSYLRLCSTGGSAKHEADIQTRRRDYLSHFILRLAYCRSEDLARWFVAREMELFRYKFAALSSFEVKQFLEANGFEIHPLTEAQKDEVKDGLYESTVGQSVAKIELLDFYKVPFTQVLDLVRGRRCFLKAGYAYVNTHDLVSLVGTKQQDEIEQGLQAAKTMVEDVEADERISRTLKALHNSYTGRDYTVCRDAAVPIESLDQLSKTSMPLCMRMCHEHIRANHHIKHSGRMQYGLFLKGIGVALEDSLRFWREEFTKKMDADKFTRSYEYNIYHNYGKKGSMVNYTPYSCAKIIKDVAGPGDCHGCPYKNMDQGSLKTKLSSYGLSASAIDEVMFFVSRGHYQIGCGKYFQLTHNSPVEPSINHPNNYFEESQIAMGNRQKRANGSAPPKARIRPDIKGHGDRSMLMGDDDDELWRIAETQERIMQSQKDISEAFNDDLDLTQIDY.

Positions 298, 377, 393, and 433 each coordinate [4Fe-4S] cluster. Positions arginine 466–methionine 492 are disordered. Residues isoleucine 480–arginine 490 are compositionally biased toward basic and acidic residues.

The protein belongs to the eukaryotic-type primase large subunit family. As to quaternary structure, heterodimer of a catalytic subunit Prim1 and a regulatory subunit Prim2, also known as the DNA primase complex. Component of the alpha DNA polymerase complex (also known as the alpha DNA polymerase-primase complex) consisting of four subunits: the catalytic subunit PolA1, the regulatory subunit PolA2, and the primase complex subunits Prim1 and Prim2 respectively. PolA1 associates with the DNA primase complex before association with PolA2. [4Fe-4S] cluster serves as cofactor. As to expression, expressed in embryos (at protein level).

Its function is as follows. Regulatory subunit of the DNA primase complex and component of the DNA polymerase alpha complex (also known as the alpha DNA polymerase-primase complex) which play an essential role in the initiation of DNA synthesis. During the S phase of the cell cycle, the DNA polymerase alpha complex (composed of a catalytic subunit PolA1, an accessory subunit PolA2 and two primase subunits, the catalytic subunit Prim1 and the regulatory subunit Prim2) is recruited to DNA at the replicative forks. The primase subunit of the polymerase alpha complex initiates DNA synthesis by oligomerising short RNA primers on both leading and lagging strands. These primers are initially extended by the polymerase alpha catalytic subunit and subsequently transferred to polymerase delta and polymerase epsilon for processive synthesis on the lagging and leading strand, respectively. In the primase complex, both subunits are necessary for the initial di-nucleotide formation, but the extension of the primer depends only on the catalytic subunit. Stabilizes and modulates the activity of the catalytic subunit. The chain is DNA primase large subunit from Drosophila melanogaster (Fruit fly).